A 717-amino-acid chain; its full sequence is Cleavage stimulation factor subunit 3 (717 aa).

An N-acetylserine modification is found at S2. HAT repeat units follow at residues 45-77, 79-110, 117-152, 163-196, 221-261, 271-303, 319-352, 354-387, and 458-494; these read QPID…AEIK, KNYD…YVRE, SYKE…FLKG, QRIT…YEEG, KEYE…WEKS, LITK…YLEQ, LFSD…YEES, MKYE…FARR, and NEDN…FESN. The interval 684–705 is disordered; sequence VKRPNEDSDEDEEKGAVVPPVH. Phosphoserine is present on S691.

As to quaternary structure, homodimer. The CSTF complex is composed of CSTF1 (50 kDa subunit), CSTF2 (64 kDa subunit) and CSTF3 (77 kDa subunit). CSTF3 directly interacts with CSTF1 and CSTF2. Interacts with FIP1L1.

The protein resides in the nucleus. In terms of biological role, one of the multiple factors required for polyadenylation and 3'-end cleavage of mammalian pre-mRNAs. In Homo sapiens (Human), this protein is Cleavage stimulation factor subunit 3 (CSTF3).